The sequence spans 354 residues: Protein-arginine kinase (354 aa).

A Phosphagen kinase C-terminal domain is found at 24-254; sequence IVLSSRIRLA…QQIIHQEKTA (231 aa). Residues 27-31, His92, Arg125, 176-180, and 207-212 each bind ATP; these read SSRIR, RASVM, and RGIYGE. An RDXXRA motif of the pArg binding pocket involved in allosteric regulation motif is present at residues 337 to 342; the sequence is RDYRRA.

This sequence belongs to the ATP:guanido phosphotransferase family.

The enzyme catalyses L-arginyl-[protein] + ATP = N(omega)-phospho-L-arginyl-[protein] + ADP + H(+). With respect to regulation, appears to be allosterically activated by the binding of pArg-containing polypeptides to the pArg-binding pocket localized in the C-terminal domain of McsB. Its function is as follows. Catalyzes the specific phosphorylation of arginine residues in a large number of proteins. Is part of the bacterial stress response system. Protein arginine phosphorylation has a physiologically important role and is involved in the regulation of many critical cellular processes, such as protein homeostasis, motility, competence, and stringent and stress responses, by regulating gene expression and protein activity. The chain is Protein-arginine kinase from Bacillus mycoides (strain KBAB4) (Bacillus weihenstephanensis).